The following is a 208-amino-acid chain: Putative archaetidylserine decarboxylase proenzyme (208 aa).

Ser-172 functions as the Schiff-base intermediate with substrate; via pyruvic acid in the catalytic mechanism. Position 172 is a pyruvic acid (Ser); by autocatalysis (Ser-172).

This sequence belongs to the phosphatidylserine decarboxylase family. PSD-A subfamily. Heterodimer of a large membrane-associated beta subunit and a small pyruvoyl-containing alpha subunit. Requires pyruvate as cofactor. Is synthesized initially as an inactive proenzyme. Formation of the active enzyme involves a self-maturation process in which the active site pyruvoyl group is generated from an internal serine residue via an autocatalytic post-translational modification. Two non-identical subunits are generated from the proenzyme in this reaction, and the pyruvate is formed at the N-terminus of the alpha chain, which is derived from the carboxyl end of the proenzyme. The post-translation cleavage follows an unusual pathway, termed non-hydrolytic serinolysis, in which the side chain hydroxyl group of the serine supplies its oxygen atom to form the C-terminus of the beta chain, while the remainder of the serine residue undergoes an oxidative deamination to produce ammonia and the pyruvoyl prosthetic group on the alpha chain.

Its subcellular location is the cell membrane. It catalyses the reaction archaetidylserine + H(+) = archaetidylethanolamine + CO2. Catalyzes the formation of archaetidylethanolamine (PtdEtn) from archaetidylserine (PtdSer). The sequence is that of Putative archaetidylserine decarboxylase proenzyme from Methanosarcina mazei (strain ATCC BAA-159 / DSM 3647 / Goe1 / Go1 / JCM 11833 / OCM 88) (Methanosarcina frisia).